Here is a 189-residue protein sequence, read N- to C-terminus: Putative manganese efflux pump MntP (189 aa).

The next 6 helical transmembrane spans lie at 3-23 (IVST…AAVS), 41-61 (MIFG…GRVA), 62-82 (ADYV…FLGI), 103-123 (SFIL…SVGV), 132-152 (IVPV…AGVM), and 167-187 (IIGG…HLYG).

It belongs to the MntP (TC 9.B.29) family.

Its subcellular location is the cell inner membrane. Its function is as follows. Probably functions as a manganese efflux pump. This chain is Putative manganese efflux pump MntP, found in Methylobacillus flagellatus (strain ATCC 51484 / DSM 6875 / VKM B-1610 / KT).